The sequence spans 49 residues: Osteocalcin (49 aa).

Positions 1-47 (YLDHWLGAPAPYPDPLEPRREVCELNPDCDELADHIGFQEAYRRFYG) constitute a Gla domain. Proline 9 is modified (hydroxyproline). Ca(2+)-binding residues include glutamate 17, glutamate 21, glutamate 24, and aspartate 30. 4-carboxyglutamate occurs at positions 17, 21, and 24. An intrachain disulfide couples cysteine 23 to cysteine 29.

It belongs to the osteocalcin/matrix Gla protein family. Post-translationally, gamma-carboxyglutamate residues are formed by vitamin K dependent carboxylation by GGCX. These residues are essential for the binding of calcium. Decarboxylation promotes the hormone activity.

The protein resides in the secreted. Functionally, the carboxylated form is one of the main organic components of the bone matrix, which constitutes 1-2% of the total bone protein. It acts as a negative regulator of bone formation and is required to limit bone formation without impairing bone resorption or mineralization. The carboxylated form binds strongly to apatite and calcium. The uncarboxylated form acts as a hormone secreted by osteoblasts, which regulates different cellular processes, such as energy metabolism, male fertility and brain development. Regulates of energy metabolism by acting as a hormone favoring pancreatic beta-cell proliferation, insulin secretion and sensitivity and energy expenditure. Uncarboxylated osteocalcin hormone also promotes testosterone production in the testes: acts as a ligand for G protein-coupled receptor GPRC6A at the surface of Leydig cells, initiating a signaling response that promotes the expression of enzymes required for testosterone synthesis in a CREB-dependent manner. Also acts as a regulator of brain development: osteocalcin hormone crosses the blood-brain barrier and acts as a ligand for GPR158 on neurons, initiating a signaling response that prevents neuronal apoptosis in the hippocampus, favors the synthesis of all monoamine neurotransmitters and inhibits that of gamma-aminobutyric acid (GABA). Osteocalcin also crosses the placenta during pregnancy and maternal osteocalcin is required for fetal brain development. This chain is Osteocalcin (BGLAP), found in Equus caballus (Horse).